Here is a 387-residue protein sequence, read N- to C-terminus: Patatin group D-2 (387 aa).

A signal peptide spans 1–23 (MATTKSFLILIVMILATTSSTFA). In terms of domain architecture, PNPLA spans 32–230 (LSIDGGGIKG…TVADPALLSI (199 aa)). Positions 36–41 (GGGIKG) match the GXGXXG motif. Positions 75-79 (GTSTG) match the GXSXG motif. Ser77 functions as the Nucleophile in the catalytic mechanism. N-linked (GlcNAc...) asparagine glycosylation is present at Asn115. The active-site Proton acceptor is the Asp216. A DGA/G motif is present at residues 216–218 (DGA). Positions 361 to 385 (ETYEEALKRFAKLLSDRKKLRANKA) form a coiled coil.

Belongs to the patatin family. As to expression, tuber.

The protein resides in the vacuole. In terms of biological role, probable lipolytic acyl hydrolase (LAH), an activity which is thought to be involved in the response of tubers to pathogens. The protein is Patatin group D-2 of Solanum tuberosum (Potato).